The primary structure comprises 828 residues: Vacuolar transporter chaperone complex subunit 2 (828 aa).

The 146-residue stretch at 1 to 146 folds into the SPX domain; that stretch reads MLFGVKLANE…PKYPSVKSLL (146 aa). Residues 1–693 lie on the Cytoplasmic side of the membrane; that stretch reads MLFGVKLANE…EAKVWLANER (693 aa). The segment at 127 to 134 is important for inositol polyphosphate binding; that stretch reads KIVKKHDK. Phosphoserine occurs at positions 182, 187, 196, 264, 583, 615, and 616. The interval 580–636 is disordered; it reads RRLSNLKEPQHQAAVPVSQEENERITSQGDLEADGSSDEETEQEPHSKRSKKVRRRK. Residues 610-621 are compositionally biased toward acidic residues; sequence LEADGSSDEETE. Position 620 is a phosphothreonine (threonine 620). At serine 626 the chain carries Phosphoserine. Residues 627–636 show a composition bias toward basic residues; the sequence is KRSKKVRRRK. Serine 657 is subject to Phosphoserine. The chain crosses the membrane as a helical span at residues 694-716; that stretch reads TFNRWLSVTSLLSVLTFSIYNSV. Residues 717–727 lie on the Vacuolar side of the membrane; sequence KKAEYPTLANY. Residues 728–748 traverse the membrane as a helical segment; sequence MAYVYFGLTIFCALWSYSIYM. Over 749–766 the chain is Cytoplasmic; that stretch reads KRVDIIQQRSGQHLDAPL. Residues 767–787 form a helical membrane-spanning segment; the sequence is GPVLVSIVLFVTLVVNFVMAF. The Vacuolar portion of the chain corresponds to 788–828; that stretch reads RNAAKSRQELQIQNLEVPERIPEVLRPLQNYLFKLMGPSSD.

The protein belongs to the VTC2/3 family. In terms of assembly, the VTC core complex is an integral membrane heterooligomer composed of the catalytic subunit VTC4 and the accessory subunits VTC1, VTC2 and VTC3. The complex exists in 2 different sub-complexes: VTC1-VTC2-VCT4 and VCT1-VTC3-VTC4. The VCT1-VTC3-VTC4 subcomplex is mostly found on the vacuolar membrane. The VTC1-VTC2-VCT4 subcomplex is observed in the cell periphery, probably ER and nuclear envelope, but localizes to the vacuole under phosphate starvation. Each subunit contains 3 transmembrane helices. VTC1 is a small membrane protein without hydrophilic domain. VTC2, VTC3 and VTC4 are related and have 2 hydrophilic domains that face the cytosol, an N-terminal SPX domain and the central core domain. The central core in VTC4 is the catalytic domain, with the essential catalytic lysine replaced by isoleucine and leucine in VTC2 and VTC3, respectively. The core complex associates with the accessory subunit VTC5. The complex interacts with the v-SNARE NYV1 and with the V(0) subunit of V-ATPase VPH1.

It localises to the vacuole membrane. It is found in the cytoplasm. Its subcellular location is the cell cortex. The protein localises to the endoplasmic reticulum membrane. The protein resides in the cytoplasmic vesicle. It localises to the autophagosome membrane. In terms of biological role, accessory subunit of the vacuolar transporter chaperone (VTC) complex. The VTC complex acts as a vacuolar polyphosphate polymerase that catalyzes the synthesis of inorganic polyphosphate (polyP) via transfer of phosphate from ATP to a growing polyP chain, releasing ADP. VTC exposes its catalytic domain VTC4 to the cytosol, where the growing polyP chain winds through a tunnel-shaped pocket, integrating cytoplasmic polymer synthesis with polyP membrane translocation. The VTC complex carries 9 vacuolar transmembrane domains, which are likely to constitute the translocation channel into the organelle lumen. PolyP synthesis is tightly coupled to its transport into the vacuole lumen, in order to avoid otherwise toxic intermediates in the cytosol, and it depends on the proton gradient across the membrane, formed by V-ATPase. Binds inositol hexakisphosphate (Ins6P) and similar inositol polyphosphates, such as 5-diphospho-inositol pentakisphosphate (5-InsP7); these are important intracellular signaling molecules. Inositol polyphosphate binding promotes vacuolar polyphosphate synthesis. The VTC complex also plays a role in vacuolar membrane fusion. Required for SEC18/NSF activity in SNARE priming, membrane binding of LMA1 and V(0) trans-complex formation. The chain is Vacuolar transporter chaperone complex subunit 2 from Saccharomyces cerevisiae (strain ATCC 204508 / S288c) (Baker's yeast).